The chain runs to 283 residues: Tyrosine recombinase THA_404 (283 aa).

Positions 1–86 (MDKVIEMFSD…SLNSFFNYLE (86 aa)) constitute a Core-binding (CB) domain. The 175-residue stretch at 107-281 (KIPDFLTEDE…ADQEKFDAVK (175 aa)) folds into the Tyr recombinase domain. Catalysis depends on residues arginine 145, lysine 170, histidine 233, arginine 236, and histidine 259. Tyrosine 268 (O-(3'-phospho-DNA)-tyrosine intermediate) is an active-site residue.

Belongs to the 'phage' integrase family.

It is found in the cytoplasm. Its function is as follows. Site-specific tyrosine recombinase, which acts by catalyzing the cutting and rejoining of the recombining DNA molecules. The chain is Tyrosine recombinase THA_404 from Thermosipho africanus (strain TCF52B).